A 1033-amino-acid polypeptide reads, in one-letter code: MTSVRCKLAQYLEDLEDVDLKKFKMHLEDYPPEKGCIPVPRGQMEKADHLDLATLMIDFNGEEKAWAMAVWIFAAINRRDLWEKAKKDQPEWNDTCTSHSSMVCQEDSLEEEWMGLLGYLSRISICKKKKDYCKMYRRHVRSRFYSIKDRNARLGESVDLNSRYTQLQLVKEHPSKQEREHELLTIGRTKMRDSPMSSLKLELLFEPEDGHSEPVHTVVFQGAAGIGKTILARKIMLDWALGKLFKDKFDYLFFIHCREVSLRTPRSLADLIVSCWPDPNPPVCKILRKPSRILFLMDGFDELQGAFDEHIGEVCTDWQKAVRGDILLSSLIRKKLLPKASLLITTRPVALEKLQHLLDHPRHVEILGFSEAKRKEYFFKYFSNELQAREAFRLIQENEVLFTMCFIPLVCWIVCTGLKQQMETGKSLAQTSKTTTAVYVFFLSSLLQSRGGIEEHLFSDYLQGLCSLAADGIWNQKILFEECDLRKHGLQKTDVSAFLRMNVFQKEVDCERFYSFSHMTFQEFFAAMYYLLEEEAEGETVRKGPGGCSDLLNRDVKVLLENYGKFEKGYLIFVVRFLFGLVNQERTSYLEKKLSCKISQQVRLELLKWIEVKAKAKKLQWQPSQLELFYCLYEMQEEDFVQSAMDHFPKIEINLSTRMDHVVSSFCIKNCHRVKTLSLGFFHNSPKEEEEERRGGRPLDQVQCVFPDTHVACSSRLVNCCLTSSFCRGLFSSLSTNRSLTELDLSDNTLGDPGMRVLCEALQHPGCNIQRLWLGRCGLSHQCCFDISSVLSSSQKLVELDLSDNALGDFGIRLLCVGLKHLLCNLQKLWLVSCCLTSACCQDLALVLSSNHSLTRLYIGENALGDSGVQVLCEKMKDPQCNLQKLGLVNSGLTSICCSALTSVLKTNQNFTHLYLRSNALGDTGLRLLCEGLLHPDCKLQMLELDNCSLTSHSCWNLSTILTHNHSLRKLNLGNNDLGDLCVVTLCEVLKQQGCLLQSLQLGEMYLNRETKRALEALQEEKPELTIVFEISW.

Positions Met1 to Glu91 constitute a Pyrin domain. Ser3 is modified (phosphoserine). Cysteines 6 and 104 form a disulfide. Position 11 is a phosphotyrosine (Tyr11). The S-palmitoyl cysteine moiety is linked to residue Cys126. Residues Lys127–Lys130 form a required for binding to phosphatidylinositol 4-phosphate (PtdIns4P) region. Residues Tyr132, Tyr136, and Tyr145 each carry the phosphotyrosine; by BTK modification. The FISNA domain occupies Tyr136–Glu206. At Ser157 the chain carries Phosphoserine. The residue at position 164 (Tyr164) is a Phosphotyrosine; by BTK. Thr165 serves as a coordination point for ATP. The residue at position 194 (Ser194) is a Phosphoserine; by MAPK8. The residue at position 197 (Ser197) is a Phosphoserine. An NACHT domain is found at His216 to Leu532. Residue Gly222–Ile230 coordinates ATP. Residue Ser261 is modified to Phosphoserine. Residue Ser291 is modified to Phosphoserine; by PKD/PRKD1. Lys320 is covalently cross-linked (Glycyl lysine isopeptide (Lys-Gly) (interchain with G-Cter in ubiquitin)). Ser330 bears the Phosphoserine mark. The KFERQ-like motif 1 signature appears at Leu351–Gln355. Lys426 participates in a covalent cross-link: Glycyl lysine isopeptide (Lys-Gly) (interchain with G-Cter in ubiquitin). His518 is an ATP binding site. The KFERQ-like motif 2 motif lies at Gln601–Glu605. Lys687 participates in a covalent cross-link: Glycyl lysine isopeptide (Lys-Gly) (interchain with G-Cter in ubiquitin). A phosphoserine mark is found at Ser725 and Ser732. LRR repeat units lie at residues Ser739–Cys759, Asn768–Ser789, Lys796–Cys816, Asn825–Leu846, and Ser853–Cys873. The short motif at Gln795–Glu799 is the KFERQ-like motif 3 element. Residue Ser803 is modified to Phosphoserine; by CSNK1A1. Residues Cys834, Cys835, and Cys841 are each lipidated (S-palmitoyl cysteine). The residue at position 858 (Tyr858) is a Phosphotyrosine. Lys875 participates in a covalent cross-link: Glycyl lysine isopeptide (Lys-Gly) (interchain with G-Cter in ubiquitin). 4 LRR repeats span residues Asn882–Ser903, Asn910–Cys930, Lys939–Thr960, and Ser967–Glu988. The S-palmitoyl cysteine moiety is linked to residue Cys955. Lys970 is covalently cross-linked (Glycyl lysine isopeptide (Lys-Gly) (interchain with G-Cter in ubiquitin)). A KFERQ-like motif 4 motif is present at residues Glu988–Gln992. A Phosphoserine modification is found at Ser1032.

It belongs to the NLRP family. Sensor component of NLRP3 inflammasomes; inflammasomes are supramolecular complexes that assemble in the cytosol in response to pathogens and other damage-associated signals and play critical roles in innate immunity and inflammation. The core of NLRP3 inflammasomes consists of a signal sensor component (NLRP3), an adapter (PYCARD/ASC), which recruits an effector pro-inflammatory caspase (CASP1 and, possibly, CASP4 and CASP5). Homodecamer; inactive NLRP3 forms homodecameric double-ring cages that hide pyrin domains within NACHT-LRR rings to avoid premature activation. Interacts (via pyrin domain) with PYCARD/ASC (via pyrin domain); interaction is direct. Interacts (via LRR repeat domain) with NEK7 (via N-terminus); the interaction is required for the formation of the complex NLRP3:PYCARD, oligomerization of PYCARD/ASC and activation of CASP1. Interacts (via LRR repeat domain) with NR4A1/Nur77 (via N-terminus); the interaction is direct, requires activation of NR4A1 by its ligands NBRE-containing dsDNA and lipopolysaccharide, and stimulates the association of NLRP3 with NEK7 for non-canonical NLRP3 inflammasome activation. Interacts with CARD8; leading to inhibit formation of the NLRP3 inflammasome. Interacts with MEFV; this interaction targets NLRP3 to degradation by autophagy, hence preventing excessive IL1B- and IL18-mediated inflammation. Interacts with EIF2AK2/PKR; this interaction requires EIF2AK2 activity, is accompanied by EIF2AK2 autophosphorylation and promotes inflammasome assembly in response to specific stimuli. Interacts with GBP5 (via DAPIN domain); this interaction promotes inflammasome assembly in response to microbial and soluble, but not crystalline, agents. Interacts with PML (isoform PML-1) (via the leucine-rich repeat (LRR) domain); PML-mediated increase in NLRP3 inflammasome activation does not depend upon this interaction. Interacts (via NACHT domain) with DHX33 (via DEAH box); NLRP3 activation in presence of cytosolic dsRNA is mediated by DHX33. Interacts (via NACHT and LRR domains) with ARRB2; this interaction is direct and inducible by polyunsaturated fatty acids (PUFAs). Interacts (via NACHT domain) with DDX3X under both LPS-primed and inflammasome-activating conditions. Interacts with IRF4 (via the LRR domain); this interaction is direct and is required for optimal IRF4 binding to IL4 promoter and efficient IL4 transactivation during differentiation of Th2 helper T-cells. Interacts with MAVS; promoting localization to mitochondria and activation of the NLRP3 inflammasome. Interacts with MARK4; promoting localization of NLRP3 to the microtubule organizing center (MTOC). Interacts with TRIM50; this interaction also promotes NLRP3 oligomerization and subsequent inflammasome activation. Interacts with IRGM; preventing NLRP3 inflammasome assembly and promoting NLRP3 degradation. Interacts (via KFERQ-like motifs) with HSPA8/HSC70; promoting NLRP3 degradation by the chaperone-mediated autophagy pathway. Interacts (via NACHT and LLR domains) with ABHD8; this interaction is enhanced in the presence of NLRP3 inflammasome inducers, such as ATP, nigericin, silica, or alum. Interaction with ABHD8 leads the recruitment of ZDHHC12, hence facilitating NLRP3 palmitoylation and degradation by the chaperone-mediated autophagy pathway (CMA), therefore attenuating NLRP3 inflammasome activation. In terms of processing, phosphorylation at Ser-194 by MAPK8/JNK1 increases inflammasome activation by promoting deubiquitination by BRCC3 and NLRP3 homooligomerization. Phosphorylation at Ser-803 by CSNK1A1 prevents inflammasome activation by preventing NEK7 recruitment. Phosphorylation at Ser-3 in the pyrin domain inhibits homomultimerization of NLRP3 and activation of the NLRP3 inflammasome: dephosphorylation by protein phosphatase 2A (PP2A) promotes assembly of the NLRP3 inflammasome. Phosphorylation at Ser-291 by PKD/PRKD1 promotes NLRP3 inflammasome assembly. Phosphorylation by ERK1/MAPK3 promotes NLRP3 inflammasome assembly. Phosphorylation by BTK (at Tyr-132, Tyr-136, Tyr-145 and Tyr-164) in the region that mediates binding to phosphatidylinositol phosphate, promotes relocalization of NLRP3 and assembly of the NLRP3 inflammasome. Phosphorylation at Tyr-858 inhibits NLRP3 inflammasome assembly: dephosphorylation by PTPN22 promotes inflammasome activation Phosphorylated by LATS1 and LATS2 at Ser-261 following palmitoylation by ZDHHC1, promoting its relocalization to the microtubule organizing center (MTOC), where NLRP3 is activated by NEK7, leading to inflammasome assembly and activation. Post-translationally, ubiquitinated; undergoes both 'Lys-48'- and 'Lys-63'-linked polyubiquitination. Ubiquitination does not lead to degradation, but inhibits inflammasome activation. Deubiquitination is catalyzed by BRCC3 and associated with NLRP3 activation and inflammasome assembly. This process can be induced by the activation of Toll-like receptors (by LPS), through a non-transcriptional pathway dependent on the mitochondrial production of reactive oxygen species, and by ATP. Ubiquitinated by TRIM31 via 'Lys-48'-linked ubiquitination, leading to its degradation by the proteasome. Ubiquitinated at Lys-687 by the SCF(FBXL2) complex, leading to its degradation by the proteasome. Ubiquitinated by TRIM35 via 'lys-48' and 'Lys-63'-linked ubiquitination leading to inhibition of NLRP3 inflammasome activation. Undergoes 'Lys-27'-linked polyubiquitination by MARCHF5, leading to NLRP3-NEK7 complex formation and NLRP3 oligomerization. The disulfide bond in the pyrin domain might play a role in reactive oxygen species-mediated activation. In terms of processing, palmitoylation by ZDHHC12 promotes NLRP3 degradation by the chaperone-mediated autophagy pathway (CMA) and therefore limits NLRP3 inflammasome activation. Interaction with ZDHHC12, and hence NLRP3 palmitoylation, is enhanced by ABHD8. Following palmitoylation, HSPA8/HSC70 recognizes and binds the KFERQ-like motifs on NLRP3 and promotes NLRP3 recruitment to lysosomes, where it is degraded via the chaperone-mediated autophagy pathway in a LAMP2-dependent process. Palmitoylation at Cys-834 and Cys-835 by ZDHHC5 enhances its binding to NEK7 leading to inflammasome assembly and activation. Palmitoylation at Cys-126 and Cys-955 by ZDHHC1 facilitates phosphorylation at Ser-261 by LATS1 and LATS2, promoting its relocalization to the microtubule organizing center (MTOC), where NLRP3 is activated by NEK7, leading to inflammasome assembly and activation. Depalmitoylated by ABHD17A. Post-translationally, degraded via selective autophagy following interaction with Irgm1. Irgm1 promotes NLRP3 recruitment to autophagosome membranes, promoting its SQSTM1/p62-dependent autophagy-dependent degradation. In terms of tissue distribution, expressed with high levels in peripheral blood leukocytes, including Th2 lymphocytes and macrophages. Expressed at low levels in resting osteoblasts (at protein level).

It is found in the cytoplasm. The protein localises to the cytosol. The protein resides in the inflammasome. It localises to the cytoskeleton. Its subcellular location is the microtubule organizing center. It is found in the golgi apparatus membrane. The protein localises to the endoplasmic reticulum. The protein resides in the mitochondrion. It localises to the secreted. Its subcellular location is the nucleus. It catalyses the reaction ATP + H2O = ADP + phosphate + H(+). Its activity is regulated as follows. Under resting conditions, NLRP3 binds ADP and is autoinhibited. Inactive NLRP3 forms homodecameric double-ring cages that hide pyrin domains within NACHT-LRR rings to avoid premature activation. NLRP3 activation stimuli include extracellular ATP, nigericin, reactive oxygen species, crystals of monosodium urate or cholesterol, amyloid-beta fibers, environmental or industrial particles and nanoparticles, such as asbestos, silica, aluminum salts, cytosolic dsRNA, etc. Almost all stimuli trigger intracellular K(+) efflux. These stimuli lead to membrane perturbations that induce activation of NLRP3. Upon activation, NLRP3 is transported to microtubule organizing center (MTOC), where it is unlocked by NEK7, leading to its relocalization to dispersed trans-Golgi network (dTGN) vesicle membranes and recruitment of PYCARD/ASC for the formation of an active inflammasome complex. NEK7-activated NLRP3 forms a disk-shaped inflammasome. NLRP3 and PYCARD/ASC interact via their respective pyrin domains; interaction initiates speck formation (nucleation) which greatly enhances further addition of soluble PYCARD/ASC molecules to the speck in a prion-like polymerization process. Clustered PYCARD/ASC nucleates the formation of CASP1 filaments through the interaction of their respective CARD domains, acting as a platform for CASP1 polymerization and activation. Active CASP1 then processes IL1B and IL18 precursors, leading to the release of mature cytokines in the extracellular milieu and inflammatory response. NLRP3 inflammasome assembly is inhibited by IRGM, which impedes NLRP3 oligomerization. NLRP3 inflammasome is inhibited by cyclic AMP (cAMP), which directly binds NLRP3; inhibition is relieved by calcium-sensing receptor CASR, which inhibits production of cAMP. Specifically inhibited by sulfonylurea MCC950 (also named CP-456,773, CRID3), a potent and specific small-molecule inhibitor of the NLRP3 inflammasome that acts by preventing ATP hydrolysis. Functionally, sensor component of the NLRP3 inflammasome, which mediates inflammasome activation in response to defects in membrane integrity, leading to secretion of inflammatory cytokines IL1B and IL18 and pyroptosis. In response to pathogens and other damage-associated signals that affect the integrity of membranes, initiates the formation of the inflammasome polymeric complex composed of NLRP3, CASP1 and PYCARD/ASC. Recruitment of pro-caspase-1 (proCASP1) to the NLRP3 inflammasome promotes caspase-1 (CASP1) activation, which subsequently cleaves and activates inflammatory cytokines IL1B and IL18 and gasdermin-D (GSDMD), promoting cytokine secretion and pyroptosis. Activation of NLRP3 inflammasome is also required for HMGB1 secretion; stimulating inflammatory responses. Under resting conditions, ADP-bound NLRP3 is autoinhibited. NLRP3 activation stimuli include extracellular ATP, nigericin, reactive oxygen species, crystals of monosodium urate or cholesterol, amyloid-beta fibers, environmental or industrial particles and nanoparticles, such as asbestos, silica, aluminum salts, cytosolic dsRNA, etc. Almost all stimuli trigger intracellular K(+) efflux. These stimuli lead to membrane perturbation and activation of NLRP3. Upon activation, NLRP3 is transported to microtubule organizing center (MTOC), where it is unlocked by NEK7, leading to its relocalization to dispersed trans-Golgi network (dTGN) vesicle membranes and formation of an active inflammasome complex. Associates with dTGN vesicle membranes by binding to phosphatidylinositol 4-phosphate (PtdIns4P). Shows ATPase activity. Its function is as follows. Independently of inflammasome activation, regulates the differentiation of T helper 2 (Th2) cells and has a role in Th2 cell-dependent asthma and tumor growth. During Th2 differentiation, required for optimal IRF4 binding to IL4 promoter and for IRF4-dependent IL4 transcription. Binds to the consensus DNA sequence 5'-GRRGGNRGAG-3'. May also participate in the transcription of IL5, IL13, GATA3, CCR3, CCR4 and MAF. This chain is NACHT, LRR and PYD domains-containing protein 3, found in Mus musculus (Mouse).